Here is a 168-residue protein sequence, read N- to C-terminus: DNA-binding protein inhibitor ID-1 (168 aa).

The 53-residue stretch at 46 to 98 folds into the bHLH domain; that stretch reads LPALLDEQQVNVLLYDMNGCYSRLKELVPTLPQNRKVSKVEILQHVIDYIRDL. Residues 53-106 are interaction with IFI204; the sequence is QQVNVLLYDMNGCYSRLKELVPTLPQNRKVSKVEILQHVIDYIRDLQLELNSES. The Nuclear export signal signature appears at 91-104; that stretch reads VIDYIRDLQLELNS.

Heterodimer with other HLH proteins. Interacts with CLOCK and BMAL1. Interacts with COPS5, IFI204, GATA4 and NKX2-5. Polyubiquitinated; which is favored by Ifi204 and leads to proteasomal degradation.

The protein resides in the cytoplasm. It is found in the nucleus. Transcriptional regulator (lacking a basic DNA binding domain) which negatively regulates the basic helix-loop-helix (bHLH) transcription factors by forming heterodimers and inhibiting their DNA binding and transcriptional activity. Implicated in regulating a variety of cellular processes, including cellular growth, senescence, differentiation, apoptosis, angiogenesis, and neoplastic transformation. Inhibits skeletal muscle and cardiac myocyte differentiation. Regulates the circadian clock by repressing the transcriptional activator activity of the CLOCK-BMAL1 heterodimer. The polypeptide is DNA-binding protein inhibitor ID-1 (Id1) (Mus musculus (Mouse)).